A 333-amino-acid chain; its full sequence is Sphingomyelinase C (333 aa).

Positions 1 to 27 are cleaved as a signal peptide; that stretch reads MKGKLLKGVLSLGVGLGALYSGTSAQA. A disulfide bond links Cys150 and Cys186.

It belongs to the neutral sphingomyelinase family. Mg(2+) serves as cofactor.

Its subcellular location is the secreted. The catalysed reaction is a sphingomyelin + H2O = phosphocholine + an N-acylsphing-4-enine + H(+). With respect to regulation, activated by cobalt and manganese ions. Its function is as follows. Required, with sphingomyelinase, to effect target cell lysis (hemolysis). This is Sphingomyelinase C (sph) from Bacillus cereus.